Reading from the N-terminus, the 273-residue chain is Large ribosomal subunit protein uL2 (273 aa).

The tract at residues 228 to 273 (IDHPHGGGEGKTSGGRHPVTPWGFSTKGKKTRKNKRTSKFIVKKRK) is disordered. Basic residues predominate over residues 254-273 (KGKKTRKNKRTSKFIVKKRK).

It belongs to the universal ribosomal protein uL2 family. As to quaternary structure, part of the 50S ribosomal subunit. Forms a bridge to the 30S subunit in the 70S ribosome.

Its function is as follows. One of the primary rRNA binding proteins. Required for association of the 30S and 50S subunits to form the 70S ribosome, for tRNA binding and peptide bond formation. It has been suggested to have peptidyltransferase activity; this is somewhat controversial. Makes several contacts with the 16S rRNA in the 70S ribosome. This is Large ribosomal subunit protein uL2 from Rickettsia typhi (strain ATCC VR-144 / Wilmington).